The primary structure comprises 193 residues: Major structural subunit of bundle-forming pilus (193 aa).

Positions 1 to 13 are excised as a propeptide; sequence MVSKIMNKKYEKG. At leucine 14 the chain carries N-methylleucine. Residues 14–35 traverse the membrane as a helical segment; it reads LSLIESAMVLALAATVTAGVMF. An intrachain disulfide couples cysteine 129 to cysteine 179.

This sequence belongs to the N-Me-Phe pilin family. 10 to 100 laterally aligned filaments or bundle-forming pili coalesce into rope-like bundles. These form linkages between the bacteria within the enteropathogenic E.coli (EPEC) microcolonies that are attached to epithelial cells.

The protein resides in the fimbrium. It localises to the membrane. Major repeating bundle-forming pilus (BFP) subunit. Is required for EPEC localized adherence. The chain is Major structural subunit of bundle-forming pilus (bfpA) from Escherichia coli O111:H-.